A 274-amino-acid polypeptide reads, in one-letter code: Diaminopimelate epimerase (274 aa).

Substrate-binding residues include asparagine 11, glutamine 44, and asparagine 64. Residue cysteine 73 is the Proton donor of the active site. Residues 74–75 (GN), asparagine 157, asparagine 190, and 208–209 (ER) each bind substrate. Residue cysteine 217 is the Proton acceptor of the active site. Position 218–219 (218–219 (GS)) interacts with substrate.

It belongs to the diaminopimelate epimerase family. Homodimer.

Its subcellular location is the cytoplasm. It carries out the reaction (2S,6S)-2,6-diaminopimelate = meso-2,6-diaminopimelate. Its pathway is amino-acid biosynthesis; L-lysine biosynthesis via DAP pathway; DL-2,6-diaminopimelate from LL-2,6-diaminopimelate: step 1/1. In terms of biological role, catalyzes the stereoinversion of LL-2,6-diaminopimelate (L,L-DAP) to meso-diaminopimelate (meso-DAP), a precursor of L-lysine and an essential component of the bacterial peptidoglycan. The protein is Diaminopimelate epimerase of Yersinia pseudotuberculosis serotype O:1b (strain IP 31758).